Reading from the N-terminus, the 191-residue chain is Protein phosphatase inhibitor 2 (191 aa).

Residues Glu20–Glu31 show a composition bias toward basic and acidic residues. Disordered regions lie at residues Glu20–Ala52 and Arg67–Ile191. Phosphoserine occurs at positions 45 and 47. Residues Ser93–Gly109 are compositionally biased toward acidic residues. The segment covering Lys114 to Arg136 has biased composition (basic and acidic residues).

Interacts with protein phosphatase 1. Interacts with TOPP1, SRK2D/SNRK2.2, SRK2I/SNRK2.3, SRK2E/SNRK2.6, SRK2C/SNRK2.8 and PYL11. Post-translationally, phosphorylated in vivo. As to expression, expressed in roots, cotyledons, leaves, flowers and siliques.

It is found in the nucleus. Its subcellular location is the cytoplasm. Functionally, inhibitor of protein-phosphatase 1 (PP1). Binds to and inhibits PP1 activity. Acts as negative regulator of abscisic acid (ABA) signaling. Enhances the inhibition of SRK2E/SNRK2.6 by TOPP1. May promote the interaction between TOPP1 and the ABA receptor PYL11. The protein is Protein phosphatase inhibitor 2 of Arabidopsis thaliana (Mouse-ear cress).